Here is a 185-residue protein sequence, read N- to C-terminus: Ribosome-recycling factor (185 aa).

The protein belongs to the RRF family.

It is found in the cytoplasm. Responsible for the release of ribosomes from messenger RNA at the termination of protein biosynthesis. May increase the efficiency of translation by recycling ribosomes from one round of translation to another. This chain is Ribosome-recycling factor, found in Listeria monocytogenes serovar 1/2a (strain ATCC BAA-679 / EGD-e).